A 95-amino-acid polypeptide reads, in one-letter code: Small ribosomal subunit protein bS20 (95 aa).

The segment at 1–22 is disordered; that stretch reads MANIKSQIKRNRTNENNRLRNK. Positions 12 to 22 are enriched in basic and acidic residues; sequence RTNENNRLRNK.

Belongs to the bacterial ribosomal protein bS20 family.

In terms of biological role, binds directly to 16S ribosomal RNA. This Tropheryma whipplei (strain TW08/27) (Whipple's bacillus) protein is Small ribosomal subunit protein bS20.